The primary structure comprises 567 residues: Asparagine--tRNA ligase, chloroplastic/mitochondrial (567 aa).

A DNA-binding region (OB) is located at residues 113 to 191 (NIMGWVRTLR…VELKVEKIIV (79 aa)).

It belongs to the class-II aminoacyl-tRNA synthetase family.

Its subcellular location is the plastid. It is found in the chloroplast. The protein resides in the mitochondrion. It carries out the reaction tRNA(Asn) + L-asparagine + ATP = L-asparaginyl-tRNA(Asn) + AMP + diphosphate + H(+). In Arabidopsis thaliana (Mouse-ear cress), this protein is Asparagine--tRNA ligase, chloroplastic/mitochondrial.